Reading from the N-terminus, the 134-residue chain is DNA-binding protein inhibitor ID-2 (134 aa).

Residues 1 to 24 (MKAFSPVRSVRKNSLSDHGLGISR) form a disordered region. Phosphoserine is present on residues S14 and S25. Residues 23-75 (SRSKTPVDDPMSLLYNMNDCYSKLKELVPSIPQNKKVSKMEILQHVIDYILDL) form the bHLH domain. A Nuclear export signal motif is present at residues 106 to 115 (LNTDISILSL).

As to quaternary structure, interacts with GATA4 and NKX2-5. Interacts with NR0B2. Interacts with CLOCK and BMAL1. Interacts with IFI204. Interacts with NEDD9/HEF1. Interacts with ASB4; this interaction promotes ID2 proteasomal degradation. Post-translationally, ubiquitinated in a ASB4-depedent manner, leading to proteasomal degradation. In terms of processing, phosphorylated in vitro by CDK1, PKA and PKC.

It localises to the cytoplasm. It is found in the nucleus. Transcriptional regulator (lacking a basic DNA binding domain) which negatively regulates the basic helix-loop-helix (bHLH) transcription factors by forming heterodimers and inhibiting their DNA binding and transcriptional activity. Implicated in regulating a variety of cellular processes, including cellular growth, senescence, differentiation, apoptosis, angiogenesis, and neoplastic transformation. Inhibits skeletal muscle and cardiac myocyte differentiation. Regulates the circadian clock by repressing the transcriptional activator activity of the CLOCK-BMAL1 heterodimer. Restricts the CLOCK and BMAL1 localization to the cytoplasm. Plays a role in both the input and output pathways of the circadian clock: in the input component, is involved in modulating the magnitude of photic entrainment and in the output component, contributes to the regulation of a variety of liver clock-controlled genes involved in lipid metabolism. The chain is DNA-binding protein inhibitor ID-2 (ID2) from Bos taurus (Bovine).